Consider the following 121-residue polypeptide: UPF0102 protein Syncc9902_1284 (121 aa).

The protein belongs to the UPF0102 family.

The protein is UPF0102 protein Syncc9902_1284 of Synechococcus sp. (strain CC9902).